Here is a 171-residue protein sequence, read N- to C-terminus: Large ribosomal subunit protein uL10 (171 aa).

This sequence belongs to the universal ribosomal protein uL10 family. Part of the ribosomal stalk of the 50S ribosomal subunit. The N-terminus interacts with L11 and the large rRNA to form the base of the stalk. The C-terminus forms an elongated spine to which L12 dimers bind in a sequential fashion forming a multimeric L10(L12)X complex.

Forms part of the ribosomal stalk, playing a central role in the interaction of the ribosome with GTP-bound translation factors. In Erythrobacter litoralis (strain HTCC2594), this protein is Large ribosomal subunit protein uL10.